The sequence spans 372 residues: Cyclin-J (372 aa).

The Cyclin N-terminal domain occupies 15-143; that stretch reads DIHQALRYKE…LLETFQWNLC (129 aa).

The protein belongs to the cyclin family.

This is Cyclin-J (CCNJ) from Homo sapiens (Human).